The primary structure comprises 276 residues: Probable endonuclease 4 (276 aa).

Zn(2+) contacts are provided by H70, H108, E143, D176, H179, H210, D223, H225, and E255.

Belongs to the AP endonuclease 2 family. It depends on Zn(2+) as a cofactor.

The catalysed reaction is Endonucleolytic cleavage to 5'-phosphooligonucleotide end-products.. Functionally, endonuclease IV plays a role in DNA repair. It cleaves phosphodiester bonds at apurinic or apyrimidinic (AP) sites, generating a 3'-hydroxyl group and a 5'-terminal sugar phosphate. The polypeptide is Probable endonuclease 4 (Mesomycoplasma hyopneumoniae (strain J / ATCC 25934 / NCTC 10110) (Mycoplasma hyopneumoniae)).